We begin with the raw amino-acid sequence, 129 residues long: Large ribosomal subunit protein bL12 (129 aa).

The protein belongs to the bacterial ribosomal protein bL12 family. Homodimer. Part of the ribosomal stalk of the 50S ribosomal subunit. Forms a multimeric L10(L12)X complex, where L10 forms an elongated spine to which 2 to 4 L12 dimers bind in a sequential fashion. Binds GTP-bound translation factors.

Functionally, forms part of the ribosomal stalk which helps the ribosome interact with GTP-bound translation factors. Is thus essential for accurate translation. The sequence is that of Large ribosomal subunit protein bL12 from Maridesulfovibrio salexigens (strain ATCC 14822 / DSM 2638 / NCIMB 8403 / VKM B-1763) (Desulfovibrio salexigens).